The following is a 483-amino-acid chain: Aspartyl/glutamyl-tRNA(Asn/Gln) amidotransferase subunit B (483 aa).

It belongs to the GatB/GatE family. GatB subfamily. Heterotrimer of A, B and C subunits.

It catalyses the reaction L-glutamyl-tRNA(Gln) + L-glutamine + ATP + H2O = L-glutaminyl-tRNA(Gln) + L-glutamate + ADP + phosphate + H(+). The enzyme catalyses L-aspartyl-tRNA(Asn) + L-glutamine + ATP + H2O = L-asparaginyl-tRNA(Asn) + L-glutamate + ADP + phosphate + 2 H(+). Functionally, allows the formation of correctly charged Asn-tRNA(Asn) or Gln-tRNA(Gln) through the transamidation of misacylated Asp-tRNA(Asn) or Glu-tRNA(Gln) in organisms which lack either or both of asparaginyl-tRNA or glutaminyl-tRNA synthetases. The reaction takes place in the presence of glutamine and ATP through an activated phospho-Asp-tRNA(Asn) or phospho-Glu-tRNA(Gln). In Rickettsia rickettsii (strain Sheila Smith), this protein is Aspartyl/glutamyl-tRNA(Asn/Gln) amidotransferase subunit B.